The chain runs to 407 residues: Phosphonoacetate hydrolase (407 aa).

Zn(2+) is bound by residues Asp25, Thr64, Asp202, His206, Asp241, His242, and His368. Substrate-binding residues include Thr64 and Asp202. Residues His242 and His368 each contribute to the substrate site.

This sequence belongs to the alkaline phosphatase family. PhnA subfamily. Homodimer. Zn(2+) is required as a cofactor.

It catalyses the reaction phosphonoacetate + H2O = acetate + phosphate + H(+). In terms of biological role, specifically hydrolyzes phosphonoacetate. Does not have activity on other organophosphonates or acetates. The protein is Phosphonoacetate hydrolase of Pseudomonas cedrina.